Reading from the N-terminus, the 1031-residue chain is Serine-repeat antigen protein 6 (1031 aa).

Residues Met1 to Gly24 form the signal peptide. N-linked (GlcNAc...) asparagine glycosylation is present at Asn74. Residues Lys91 to Gly101 are compositionally biased toward low complexity. The interval Lys91–Lys163 is disordered. The segment covering Val104–Met139 has biased composition (polar residues). Residue Asn120 is glycosylated (N-linked (GlcNAc...) asparagine). Residues Ser140–Ser158 show a composition bias toward low complexity. Asn449 carries an N-linked (GlcNAc...) asparagine glycan. A disordered region spans residues Thr490–Asp567. Residues Pro492–Ser505 are compositionally biased toward low complexity. Residues Asn511 to Lys535 are compositionally biased toward basic and acidic residues. Asn544 carries N-linked (GlcNAc...) asparagine glycosylation. Low complexity predominate over residues Asn554–Tyr564. The N-linked (GlcNAc...) asparagine glycan is linked to Asn573. Residue Cys644 is part of the active site. Asn674 is a glycosylation site (N-linked (GlcNAc...) asparagine). Active-site residues include His810 and Asn835. Residues Asn929 and Asn974 are each glycosylated (N-linked (GlcNAc...) asparagine).

It belongs to the peptidase C1 family. In terms of processing, just prior to merozoite egress from host erythrocytes, proteolytically cleaved by SUB1 to generate the active 75kDa form.

The protein resides in the parasitophorous vacuole lumen. Its subcellular location is the parasitophorous vacuole membrane. In terms of biological role, cysteine protease which plays an essential role in merozoite egress from host erythrocytes. May cleave host SPTB/beta spectrin and ANK1/ankyrin-1 which disrupts host erythrocyte actin cytoskeleton and leads to host erythrocyte cell membrane rupture. The protein is Serine-repeat antigen protein 6 of Plasmodium falciparum (isolate 3D7).